A 190-amino-acid chain; its full sequence is Isopentenyl-diphosphate Delta-isomerase (190 aa).

Mn(2+)-binding residues include histidine 27 and histidine 34. The Nudix hydrolase domain occupies 32–171; it reads PLHFAFSSYI…PFVFSPWMVD (140 aa). Cysteine 69 is an active-site residue. Position 69 (cysteine 69) interacts with Mg(2+). Histidine 71 lines the Mn(2+) pocket. Glutamate 89 lines the Mg(2+) pocket. Residues glutamate 119 and glutamate 121 each contribute to the Mn(2+) site. The active site involves glutamate 121.

It belongs to the IPP isomerase type 1 family. Requires Mg(2+) as cofactor. It depends on Mn(2+) as a cofactor.

It localises to the cytoplasm. The catalysed reaction is isopentenyl diphosphate = dimethylallyl diphosphate. The protein operates within isoprenoid biosynthesis; dimethylallyl diphosphate biosynthesis; dimethylallyl diphosphate from isopentenyl diphosphate: step 1/1. Catalyzes the 1,3-allylic rearrangement of the homoallylic substrate isopentenyl (IPP) to its highly electrophilic allylic isomer, dimethylallyl diphosphate (DMAPP). In Corynebacterium efficiens (strain DSM 44549 / YS-314 / AJ 12310 / JCM 11189 / NBRC 100395), this protein is Isopentenyl-diphosphate Delta-isomerase.